The sequence spans 434 residues: Glycerol-3-phosphate acyltransferase 3 (434 aa).

The helical transmembrane segment at 14-34 threads the bilayer; the sequence is WLTLVLGFILLPSVFGVSLGI. Serine 68 and serine 77 each carry phosphoserine. 2 helical membrane-spanning segments follow: residues 137 to 157 and 161 to 181; these read ISLR…CVLL and VTLA…VGQL. An HXXXXD motif motif is present at residues 229–234; that stretch reads HTSPID.

Belongs to the 1-acyl-sn-glycerol-3-phosphate acyltransferase family. In terms of tissue distribution, widely expressed. Expressed in liver, kidney, testis, brain, heart, skeletal muscle, thyroid, prostate, thymus and placenta. Also expressed lung and adipose tissue.

The protein localises to the endoplasmic reticulum membrane. The catalysed reaction is sn-glycerol 3-phosphate + an acyl-CoA = a 1-acyl-sn-glycero-3-phosphate + CoA. It catalyses the reaction a 1-acyl-sn-glycero-3-phosphate + an acyl-CoA = a 1,2-diacyl-sn-glycero-3-phosphate + CoA. The enzyme catalyses dodecanoyl-CoA + sn-glycerol 3-phosphate = 1-dodecanoyl-sn-glycerol 3-phosphate + CoA. It carries out the reaction sn-glycerol 3-phosphate + hexadecanoyl-CoA = 1-hexadecanoyl-sn-glycero-3-phosphate + CoA. The catalysed reaction is sn-glycerol 3-phosphate + (9Z)-octadecenoyl-CoA = 1-(9Z-octadecenoyl)-sn-glycero-3-phosphate + CoA. It catalyses the reaction (9Z,12Z)-octadecadienoyl-CoA + sn-glycerol 3-phosphate = 1-(9Z,12Z)-octadecadienoyl-sn-glycero-3-phosphate + CoA. The enzyme catalyses 1-tetradecanoyl-sn-glycerol 3-phosphate + (9Z)-octadecenoyl-CoA = 1-tetradecanoyl-2-(9Z)-octadecenoyl-sn-glycero-3-phosphate + CoA. It carries out the reaction 1-hexadecanoyl-sn-glycero-3-phosphate + (9Z)-octadecenoyl-CoA = 1-hexadecanoyl-2-(9Z-octadecenoyl)-sn-glycero-3-phosphate + CoA. The catalysed reaction is 1-(9Z-octadecenoyl)-sn-glycero-3-phosphate + (9Z)-octadecenoyl-CoA = 1,2-di-(9Z-octadecenoyl)-sn-glycero-3-phosphate + CoA. It catalyses the reaction 1-(6Z,9Z,12Z-octadecatrienoyl)-sn-glycero-3-phosphate + (9Z)-octadecenoyl-CoA = (6Z,9Z,12Z)-octadecatrienoyl-2-(9Z)-octadecenoyl-sn-glycero-3-phosphate + CoA. The enzyme catalyses 1-(9Z,12Z,15Z)-octadecatrienoyl-sn-glycero-3-phosphate + (9Z)-octadecenoyl-CoA = 1-(9Z,12Z,15Z)-octadecatrienoyl-2-(9Z)-octadecenoyl-sn-glycero-3-phosphate + CoA. It carries out the reaction 1-(9Z-octadecenoyl)-sn-glycero-3-phosphate + tetradecanoyl-CoA = 1-(9Z)-octadecenoyl-2-tetradecanoyl-sn-glycero-3-phosphate + CoA. The catalysed reaction is 1-(9Z-octadecenoyl)-sn-glycero-3-phosphate + hexadecanoyl-CoA = 1-(9Z)-octadecenoyl-2-hexadecanoyl-sn-glycero-3-phosphate + CoA. It catalyses the reaction 1-(9Z-octadecenoyl)-sn-glycero-3-phosphate + octadecanoyl-CoA = 1-(9Z-octadecenoyl)-2-octadecanoyl-sn-glycero-3-phosphate + CoA. The enzyme catalyses 1-(9Z-octadecenoyl)-sn-glycero-3-phosphate + (9Z,12Z)-octadecadienoyl-CoA = 1-(9Z)-octadecenoyl-2-(9Z,12Z)-octadecadienoyl-sn-glycero-3-phosphate + CoA. It carries out the reaction 1-(5Z,8Z,11Z,14Z-eicosatetraenoyl)-sn-glycero-3-phosphate + (9Z)-octadecenoyl-CoA = 1-(5Z,8Z,11Z,14Z)-eicosatetraenoyl-2-(9Z)-octadecenoyl-sn-glycero-3-phosphate + CoA. It functions in the pathway glycerolipid metabolism; triacylglycerol biosynthesis. Its pathway is phospholipid metabolism; CDP-diacylglycerol biosynthesis; CDP-diacylglycerol from sn-glycerol 3-phosphate: step 1/3. With respect to regulation, inhibited by N-ethylmaleimide (NEM). In terms of biological role, converts glycerol-3-phosphate to 1-acyl-sn-glycerol-3-phosphate (lysophosphatidic acid or LPA) by incorporating an acyl moiety at the sn-1 position of the glycerol backbone. Also converts LPA into 1,2-diacyl-sn-glycerol-3-phosphate (phosphatidic acid or PA) by incorporating an acyl moiety at the sn-2 position of the glycerol backbone. Protects cells against lipotoxicity. The protein is Glycerol-3-phosphate acyltransferase 3 of Homo sapiens (Human).